Reading from the N-terminus, the 728-residue chain is Catalase-peroxidase (728 aa).

An N-terminal signal peptide occupies residues 1 to 16; that stretch reads MDNPTDSAGKCPVAHG. The interval 1-26 is disordered; that stretch reads MDNPTDSAGKCPVAHGNTPRSRSNRD. Residues 96-218 constitute a cross-link (tryptophyl-tyrosyl-methioninium (Trp-Tyr) (with M-244)); sequence WHSAGTYRIT…LGAVQMGFIY (123 aa). The Proton acceptor role is filled by histidine 97. Positions 218-244 form a cross-link, tryptophyl-tyrosyl-methioninium (Tyr-Met) (with W-96); sequence YVNPEGPNGNSDPLASARDIRETFARM. Histidine 259 is a heme b binding site.

This sequence belongs to the peroxidase family. Peroxidase/catalase subfamily. As to quaternary structure, homodimer or homotetramer. Heme b serves as cofactor. Post-translationally, formation of the three residue Trp-Tyr-Met cross-link is important for the catalase, but not the peroxidase activity of the enzyme.

It catalyses the reaction H2O2 + AH2 = A + 2 H2O. The catalysed reaction is 2 H2O2 = O2 + 2 H2O. Its function is as follows. Bifunctional enzyme with both catalase and broad-spectrum peroxidase activity. This chain is Catalase-peroxidase, found in Rhizobium leguminosarum bv. phaseoli.